We begin with the raw amino-acid sequence, 224 residues long: Large ribosomal subunit protein bL25 (224 aa).

Residues 196–224 form a disordered region; the sequence is VEEVDTDAEEVDAADVPATEQGSEEDKGE. A compositionally biased stretch (acidic residues) spans 197-208; it reads EEVDTDAEEVDA.

Belongs to the bacterial ribosomal protein bL25 family. CTC subfamily. In terms of assembly, part of the 50S ribosomal subunit; part of the 5S rRNA/L5/L18/L25 subcomplex. Contacts the 5S rRNA. Binds to the 5S rRNA independently of L5 and L18.

This is one of the proteins that binds to the 5S RNA in the ribosome where it forms part of the central protuberance. The chain is Large ribosomal subunit protein bL25 from Psychrobacter sp. (strain PRwf-1).